The sequence spans 283 residues: MGIMIDVLNYKLYGDVTVYDIIVVIVVMALATIIAKLITTNLRRALIDKMKRDQLELMLKVIYFGIIIVAFIAVLPALGLDLSGLLVAGGITGIVLGFASQSVVANLVSGIFLISEKPIKIGDQVNIDGVAGFVEDVNILSTIIRTYDGLYVRIPNEKVFTSNITNYVAHIARRFEYVVGIRYSDDAEKAIEIIKRIIEEHPFALKNPEPVVFVDNLGDSSVNIVVRIWAPSTEWYNVKMELLWKIKTELEKNGIEIPFPQRVVWFANELRANVEGKEERRQA.

The next 3 membrane-spanning stretches (helical) occupy residues 18–38 (VYDI…AKLI), 61–81 (VIYF…LGLD), and 94–114 (IVLG…IFLI).

The protein belongs to the MscS (TC 1.A.23) family.

It localises to the cell membrane. This is an uncharacterized protein from Archaeoglobus fulgidus (strain ATCC 49558 / DSM 4304 / JCM 9628 / NBRC 100126 / VC-16).